A 244-amino-acid chain; its full sequence is Probable 2-phosphosulfolactate phosphatase (244 aa).

It belongs to the ComB family. The cofactor is Mg(2+).

The catalysed reaction is (2R)-O-phospho-3-sulfolactate + H2O = (2R)-3-sulfolactate + phosphate. The sequence is that of Probable 2-phosphosulfolactate phosphatase from Cyanothece sp. (strain PCC 7425 / ATCC 29141).